Here is a 649-residue protein sequence, read N- to C-terminus: Archaeal Lon protease (649 aa).

Topologically, residues 1 to 114 (MFSIKFKTTE…KLDFKAPSST (114 aa)) are cytoplasmic. 47-54 (GDPGVGKS) serves as a coordination point for ATP. Residues 115 to 135 (TLLLIMIGAILLSEYLLKYLP) form a helical membrane-spanning segment. The Extracellular portion of the chain corresponds to 136 to 138 (QNY). A helical membrane pass occupies residues 139-159 (LLAAVTITALIVLIFGFVIIL). Residues 160–649 (TSIMGASRAS…DNRGGAERFN (490 aa)) are Cytoplasmic-facing. In terms of domain architecture, Lon proteolytic spans 456–639 (EPKVGVIYGL…DEIVPLVFDL (184 aa)). Residues Ser550 and Lys593 contribute to the active site.

The protein belongs to the peptidase S16 family. Archaeal LonB subfamily. In terms of assembly, homohexamer. Organized in a ring with a central cavity.

The protein localises to the cell membrane. ATP-dependent serine protease that mediates the selective degradation of mutant and abnormal proteins as well as certain short-lived regulatory proteins. Degrades polypeptides processively. The protein is Archaeal Lon protease of Methanocaldococcus jannaschii (strain ATCC 43067 / DSM 2661 / JAL-1 / JCM 10045 / NBRC 100440) (Methanococcus jannaschii).